We begin with the raw amino-acid sequence, 270 residues long: Cell division protein DivIB (270 aa).

Over 1–38 (MTRRNNPELNDEREPIDKIKASIDLKKKTIRRNKRKRR) the chain is Cytoplasmic. A helical membrane pass occupies residues 39 to 59 (LIKMLQFLIVIGVLIGIYYFD). Residues 60–270 (KSDASRVHNV…QSAVVKACGS (211 aa)) lie on the Extracellular side of the membrane. Residues 64–135 (SRVHNVRVNG…INLNVTEKKA (72 aa)) enclose the POTRA domain.

It belongs to the FtsQ/DivIB family. DivIB subfamily.

Its subcellular location is the cell membrane. In terms of biological role, cell division protein that may be involved in stabilizing or promoting the assembly of the division complex. The chain is Cell division protein DivIB from Erysipelothrix rhusiopathiae (strain Fujisawa).